A 376-amino-acid chain; its full sequence is N-acetyldiaminopimelate deacetylase (376 aa).

Residue D69 is part of the active site. The Proton acceptor role is filled by E128.

This sequence belongs to the peptidase M20A family. N-acetyldiaminopimelate deacetylase subfamily.

The catalysed reaction is N-acetyl-(2S,6S)-2,6-diaminopimelate + H2O = (2S,6S)-2,6-diaminopimelate + acetate. It functions in the pathway amino-acid biosynthesis; L-lysine biosynthesis via DAP pathway; LL-2,6-diaminopimelate from (S)-tetrahydrodipicolinate (acetylase route): step 3/3. Catalyzes the conversion of N-acetyl-diaminopimelate to diaminopimelate and acetate. The protein is N-acetyldiaminopimelate deacetylase of Streptococcus pneumoniae (strain Taiwan19F-14).